Consider the following 89-residue polypeptide: Small ribosomal subunit protein uS15 (89 aa).

It belongs to the universal ribosomal protein uS15 family. Part of the 30S ribosomal subunit. Forms a bridge to the 50S subunit in the 70S ribosome, contacting the 23S rRNA.

In terms of biological role, one of the primary rRNA binding proteins, it binds directly to 16S rRNA where it helps nucleate assembly of the platform of the 30S subunit by binding and bridging several RNA helices of the 16S rRNA. Its function is as follows. Forms an intersubunit bridge (bridge B4) with the 23S rRNA of the 50S subunit in the ribosome. This Ralstonia nicotianae (strain ATCC BAA-1114 / GMI1000) (Ralstonia solanacearum) protein is Small ribosomal subunit protein uS15.